The sequence spans 219 residues: Cytidylate kinase (219 aa).

21 to 29 (GPAASGKGT) lines the ATP pocket.

Belongs to the cytidylate kinase family. Type 1 subfamily.

The protein localises to the cytoplasm. It catalyses the reaction CMP + ATP = CDP + ADP. It carries out the reaction dCMP + ATP = dCDP + ADP. This chain is Cytidylate kinase, found in Rickettsia rickettsii (strain Iowa).